The chain runs to 106 residues: Iron-sulfur cluster assembly protein CyaY (106 aa).

Belongs to the frataxin family.

In terms of biological role, involved in iron-sulfur (Fe-S) cluster assembly. May act as a regulator of Fe-S biogenesis. The polypeptide is Iron-sulfur cluster assembly protein CyaY (Serratia proteamaculans (strain 568)).